Consider the following 494-residue polypeptide: Cytochrome P450 2B11 (494 aa).

Ser128 is modified (phosphoserine; by PKA). Position 436 (Cys436) interacts with heme.

This sequence belongs to the cytochrome P450 family. Requires heme as cofactor.

It localises to the endoplasmic reticulum membrane. It is found in the microsome membrane. The catalysed reaction is an organic molecule + reduced [NADPH--hemoprotein reductase] + O2 = an alcohol + oxidized [NADPH--hemoprotein reductase] + H2O + H(+). Cytochromes P450 are a group of heme-thiolate monooxygenases. In liver microsomes, this enzyme is involved in an NADPH-dependent electron transport pathway. This isozyme seems responsible for metabolism of 2,2',4,4',5,5'-hexachlorobiphenyl. This chain is Cytochrome P450 2B11 (CYP2B11), found in Canis lupus familiaris (Dog).